The sequence spans 156 residues: Small ribosomal subunit protein uS7 (156 aa).

This sequence belongs to the universal ribosomal protein uS7 family. In terms of assembly, part of the 30S ribosomal subunit. Contacts proteins S9 and S11.

One of the primary rRNA binding proteins, it binds directly to 16S rRNA where it nucleates assembly of the head domain of the 30S subunit. Is located at the subunit interface close to the decoding center, probably blocks exit of the E-site tRNA. The chain is Small ribosomal subunit protein uS7 from Paraburkholderia phymatum (strain DSM 17167 / CIP 108236 / LMG 21445 / STM815) (Burkholderia phymatum).